Reading from the N-terminus, the 244-residue chain is Neurogenin-1 (244 aa).

2 disordered regions span residues 1-27 and 39-82; these read MPAPLETCISDLDCSSSNSSSDLSSFL and LAST…ARVR. Over residues 10–27 the composition is skewed to low complexity; that stretch reads SDLDCSSSNSSSDLSSFL. Positions 93 to 145 constitute a bHLH domain; the sequence is SRRVKANDRERNRMHNLNAALDALRSVLPSFPDDTKLTKIETLRFAYNYIWAL.

In terms of assembly, efficient DNA binding requires dimerization with another bHLH protein. In terms of tissue distribution, expression restricted to the embryonic nervous system.

It is found in the nucleus. Acts as a transcriptional regulator. Involved in the initiation of neuronal differentiation. Activates transcription by binding to the E box (5'-CANNTG-3'). Associates with chromatin to enhancer regulatory elements in genes encoding key transcriptional regulators of neurogenesis. This chain is Neurogenin-1 (Neurog1), found in Mus musculus (Mouse).